Here is a 342-residue protein sequence, read N- to C-terminus: Holliday junction branch migration complex subunit RuvB (342 aa).

The interval 1–185 is large ATPase domain (RuvB-L); it reads MRKDYLNSNK…FGINTRLAYY (185 aa). ATP is bound by residues Leu-24, Arg-25, Gly-66, Lys-69, Thr-70, Thr-71, 132 to 134, Arg-175, Tyr-185, and Arg-222; that span reads EDF. Thr-70 serves as a coordination point for Mg(2+). The tract at residues 186 to 256 is small ATPAse domain (RuvB-S); it reads DVTLLTQIVK…IAQMALKALD (71 aa). The interval 259–342 is head domain (RuvB-H); the sequence is EDGLDEMDNR…PPQRAGTLFE (84 aa). Positions 314 and 319 each coordinate DNA.

It belongs to the RuvB family. In terms of assembly, homohexamer. Forms an RuvA(8)-RuvB(12)-Holliday junction (HJ) complex. HJ DNA is sandwiched between 2 RuvA tetramers; dsDNA enters through RuvA and exits via RuvB. An RuvB hexamer assembles on each DNA strand where it exits the tetramer. Each RuvB hexamer is contacted by two RuvA subunits (via domain III) on 2 adjacent RuvB subunits; this complex drives branch migration. In the full resolvosome a probable DNA-RuvA(4)-RuvB(12)-RuvC(2) complex forms which resolves the HJ.

It is found in the cytoplasm. The catalysed reaction is ATP + H2O = ADP + phosphate + H(+). Functionally, the RuvA-RuvB-RuvC complex processes Holliday junction (HJ) DNA during genetic recombination and DNA repair, while the RuvA-RuvB complex plays an important role in the rescue of blocked DNA replication forks via replication fork reversal (RFR). RuvA specifically binds to HJ cruciform DNA, conferring on it an open structure. The RuvB hexamer acts as an ATP-dependent pump, pulling dsDNA into and through the RuvAB complex. RuvB forms 2 homohexamers on either side of HJ DNA bound by 1 or 2 RuvA tetramers; 4 subunits per hexamer contact DNA at a time. Coordinated motions by a converter formed by DNA-disengaged RuvB subunits stimulates ATP hydrolysis and nucleotide exchange. Immobilization of the converter enables RuvB to convert the ATP-contained energy into a lever motion, pulling 2 nucleotides of DNA out of the RuvA tetramer per ATP hydrolyzed, thus driving DNA branch migration. The RuvB motors rotate together with the DNA substrate, which together with the progressing nucleotide cycle form the mechanistic basis for DNA recombination by continuous HJ branch migration. Branch migration allows RuvC to scan DNA until it finds its consensus sequence, where it cleaves and resolves cruciform DNA. The chain is Holliday junction branch migration complex subunit RuvB from Amoebophilus asiaticus (strain 5a2).